The primary structure comprises 1256 residues: MAKKFNYKLPSMVALTLVGSAVTAHQVQAAETTQDQTTNKNVLDSNKVKATTEQAKAEVKNPTQNISGTQVYQDPAIVQPKTANNKTGNAQVSQKVDTAQVNGDTRANQSATTNNTQPVAKSTSTTAPKTNTNVTNAGYSLVDDEDDNSENQINPELIKSAAKPAALETQYKTAAPKAATTSAPKAKTEATPKVTTFSASAQPRSVAATPKTSLPKYKPQVNSSINDYICKNNLKAPKIEEDYTSYFPKYAYRNGVGRPEGIVVHDTANDRSTINGEISYMKNNYQNAFVHAFVDGDRIIETAPTDYLSWGVGAVGNPRFINVEIVHTHDYASFARSMNNYADYAATQLQYYGLKPDSAEYDGNGTVWTHYAVSKYLGGTDHADPHGYLRSHNYSYDQLYDLINEKYLIKMGKVAPWGTQSTTTPTTPSKPTTPSKPSTGKLTVAANNGVAQIKPTNSGLYTTVYDKTGKATNEVQKTFAVSKTATLGNQKFYLVQDYNSGNKFGWVKEGDVVYNTAKSPVNVNQSYSIKPGTKLYTVPWGTSKQVAGSVSGSGNQTFKASKQQQIDKSIYLYGSVNGKSGWVSKAYLVDTAKPTPTPTPKPSTPTTNNKLTVSSLNGVAQINAKNNGLFTTVYDKTGKPTKEVQKTFAVTKEASLGGNKFYLVKDYNSPTLIGWVKQGDVIYNNAKSPVNVMQTYTVKPGTKLYSVPWGTYKQEAGAVSGTGNQTFKATKQQQIDKSIYLFGTVNGKSGWVSKAYLAVPAAPKKAVAQPKTAVKAYTVTKPQTTQTVSKIAQVKPNNTGIRASVYEKTAKNGAKYADRTFYVTKERAHGNETYVLLNNTSHNIPLGWFNVKDLNVQNLGKEVKTTQKYTVNKSNNGLSMVPWGTKNQVILTGNNIAQGTFNATKQVSVGKDVYLYGTINNRTGWVNAKDLTAPTAVKPTTSAAKDYNYTYVIKNGNGYYYVTPNSDTAKYSLKAFNEQPFAVVKEQVINGQTWYYGKLSNGKLAWIKSTDLAKELIKYNQTGMTLNQVAQIQAGLQYKPQVQRVPGKWTDAKFNDVKHAMDTKRLAQDPALKYQFLRLDQPQNISIDKINQFLKGKGVLENQGAAFNKAAQMYGINEVYLISHALLETGNGTSQLAKGADVVNNKVVTNSNTKYHNVFGIAAYDNDPLREGIKYAKQAGWDTVSKAIVGGAKFIGNSYVKAGQNTLYKMRWNPAHPGTHQYATDVDWANINAKIIKGYYDKIGEVGKYFDIPQYK.

A signal peptide spans 1–29 (MAKKFNYKLPSMVALTLVGSAVTAHQVQA). Positions 103 to 138 (GDTRANQSATTNNTQPVAKSTSTTAPKTNTNVTNAG) are enriched in polar residues. Disordered stretches follow at residues 103–151 (GDTR…NSEN), 172–214 (KTAA…KTSL), and 419–440 (TQST…PSTG). Composition is skewed to low complexity over residues 172–196 (KTAA…KVTT) and 421–439 (STTT…KPST). An N-acetylmuramoyl-L-alanine amidase region spans residues 199–775 (ASAQPRSVAA…AVAQPKTAVK (577 aa)). 7 consecutive GW domains span residues 443–517 (TVAA…YNTA), 519–593 (SPVN…DTAK), 612–686 (TVSS…YNNA), 688–762 (SPVN…VPAA), 784–859 (TTQT…VQNL), 861–936 (KEVK…APTA), and 943–1017 (AAKD…KELI). The tract at residues 776–1256 (AYTVTKPQTT…GKYFDIPQYK (481 aa)) is endo-beta-N-acetylglucosaminidase.

In the N-terminal section; belongs to the N-acetylmuramoyl-L-alanine amidase 2 family. This sequence in the C-terminal section; belongs to the glycosyl hydrolase 73 family. In terms of assembly, oligomer; forms a ring structure at the cell surface which is important for efficient partitioning of daughter cells after cell division. Undergoes proteolytic processing to generate the two extracellular lytic enzymes, probably at the septal region on the cell surface.

The protein resides in the secreted. The catalysed reaction is Hydrolyzes the link between N-acetylmuramoyl residues and L-amino acid residues in certain cell-wall glycopeptides.. The enzyme catalyses an N(4)-(oligosaccharide-(1-&gt;3)-[oligosaccharide-(1-&gt;6)]-beta-D-Man-(1-&gt;4)-beta-D-GlcNAc-(1-&gt;4)-alpha-D-GlcNAc)-L-asparaginyl-[protein] + H2O = an oligosaccharide-(1-&gt;3)-[oligosaccharide-(1-&gt;6)]-beta-D-Man-(1-&gt;4)-D-GlcNAc + N(4)-(N-acetyl-beta-D-glucosaminyl)-L-asparaginyl-[protein]. In terms of biological role, endohydrolysis of the di-N-acetylchitobiosyl unit in high-mannose glycopeptides and glycoproteins containing the -[(Man)5(GlcNAc)2]-Asn structure. One N-acetyl-D-glucosamine residue remains attached to the protein; the rest of the oligosaccharide is released intact. Cleaves the peptidoglycan connecting the daughter cells at the end of the cell division cycle, resulting in the separation of the two newly divided cells. Acts as an autolysin in penicillin-induced lysis. The sequence is that of Bifunctional autolysin (atl) from Staphylococcus aureus (strain NCTC 8325 / PS 47).